The following is an 861-amino-acid chain: Leucine--tRNA ligase (861 aa).

Residues 42 to 52 carry the 'HIGH' region motif; sequence PYPSGRLHMGH. The 'KMSKS' region motif lies at 619-623; that stretch reads KMSKS. Lys-622 contributes to the ATP binding site.

It belongs to the class-I aminoacyl-tRNA synthetase family.

It is found in the cytoplasm. It catalyses the reaction tRNA(Leu) + L-leucine + ATP = L-leucyl-tRNA(Leu) + AMP + diphosphate. The protein is Leucine--tRNA ligase of Haemophilus ducreyi (strain 35000HP / ATCC 700724).